The chain runs to 361 residues: Phospho-N-acetylmuramoyl-pentapeptide-transferase (361 aa).

10 consecutive transmembrane segments (helical) span residues 25 to 45, 72 to 92, 95 to 115, 135 to 155, 169 to 189, 200 to 220, 240 to 260, 264 to 284, 289 to 309, and 338 to 358; these read TGGA…WIID, TPTM…LLWA, LNPY…VGFY, LLIE…LGRA, VMLN…VGAG, GLAI…SYLA, LAVL…FNAP, IFMG…IAVA, IVLA…IVQV, and QIVI…LSTL.

It belongs to the glycosyltransferase 4 family. MraY subfamily. Mg(2+) serves as cofactor.

Its subcellular location is the cell inner membrane. It carries out the reaction UDP-N-acetyl-alpha-D-muramoyl-L-alanyl-gamma-D-glutamyl-meso-2,6-diaminopimeloyl-D-alanyl-D-alanine + di-trans,octa-cis-undecaprenyl phosphate = di-trans,octa-cis-undecaprenyl diphospho-N-acetyl-alpha-D-muramoyl-L-alanyl-D-glutamyl-meso-2,6-diaminopimeloyl-D-alanyl-D-alanine + UMP. Its pathway is cell wall biogenesis; peptidoglycan biosynthesis. In terms of biological role, catalyzes the initial step of the lipid cycle reactions in the biosynthesis of the cell wall peptidoglycan: transfers peptidoglycan precursor phospho-MurNAc-pentapeptide from UDP-MurNAc-pentapeptide onto the lipid carrier undecaprenyl phosphate, yielding undecaprenyl-pyrophosphoryl-MurNAc-pentapeptide, known as lipid I. This chain is Phospho-N-acetylmuramoyl-pentapeptide-transferase, found in Rhodopseudomonas palustris (strain ATCC BAA-98 / CGA009).